The sequence spans 41 residues: Large ribosomal subunit protein bL36 (41 aa).

The protein belongs to the bacterial ribosomal protein bL36 family.

In Rhizobium rhizogenes (strain K84 / ATCC BAA-868) (Agrobacterium radiobacter), this protein is Large ribosomal subunit protein bL36.